The chain runs to 522 residues: Peptide chain release factor 3 (522 aa).

Residues 10-277 (ASRKTFAIIS…TFVDFAPSPS (268 aa)) enclose the tr-type G domain. Residues 19–26 (SHPDAGKT), 87–91 (DTPGH), and 141–144 (NKMD) each bind GTP.

This sequence belongs to the TRAFAC class translation factor GTPase superfamily. Classic translation factor GTPase family. PrfC subfamily.

The protein resides in the cytoplasm. Functionally, increases the formation of ribosomal termination complexes and stimulates activities of RF-1 and RF-2. It binds guanine nucleotides and has strong preference for UGA stop codons. It may interact directly with the ribosome. The stimulation of RF-1 and RF-2 is significantly reduced by GTP and GDP, but not by GMP. This chain is Peptide chain release factor 3, found in Listeria innocua serovar 6a (strain ATCC BAA-680 / CLIP 11262).